Consider the following 142-residue polypeptide: Prefoldin subunit alpha (142 aa).

Belongs to the prefoldin subunit alpha family. Heterohexamer of two alpha and four beta subunits.

It localises to the cytoplasm. Functionally, molecular chaperone capable of stabilizing a range of proteins. Seems to fulfill an ATP-independent, HSP70-like function in archaeal de novo protein folding. The sequence is that of Prefoldin subunit alpha from Methanosarcina acetivorans (strain ATCC 35395 / DSM 2834 / JCM 12185 / C2A).